The primary structure comprises 1424 residues: Serine/threonine-protein kinase LMTK3 (1424 aa).

The N-terminal stretch at 1–20 is a signal peptide; sequence MPAPGALILLAAVSASGCLA. The chain crosses the membrane as a helical span at residues 40 to 60; sequence AVVLISCSGLLAFIFLLLTCL. The interval 74–95 is disordered; sequence NPEGEDCSGEYTPPAEETSSSQ. Residues 133-411 form the Protein kinase domain; it reads LSYLQEIGSG…SDLQLQLTYL (279 aa). ATP contacts are provided by residues 139–147 and Lys-164; that span reads IGSGWFGKV. Ser-232 carries the phosphoserine modification. Asp-266 acts as the Proton acceptor in catalysis. Disordered stretches follow at residues 413–465 and 486–516; these read SERP…PDDV and RGAG…PFYE. Residues 418–439 show a composition bias toward pro residues; the sequence is RPPPPPPPPRDGPFPWPWPPSH. At Arg-490 the chain carries Omega-N-methylarginine. A compositionally biased stretch (pro residues) spans 496 to 507; it reads PWQPASAPPAPH. Phosphoserine occurs at positions 531 and 535. 5 disordered regions span residues 544–666, 680–964, 976–1024, 1041–1313, and 1325–1424; these read EHGS…PLPC, LERG…MSPE, MSPK…APET, GLEM…RKRK, and LFDQ…PVEN. The span at 571–584 shows a compositional bias: polar residues; that stretch reads QTPSEVPQLVSETW. Over residues 638–647 the composition is skewed to acidic residues; that stretch reads AEEEEEESSP. Basic and acidic residues predominate over residues 700–713; it reads PPEDDSSLRAERGS. A compositionally biased stretch (pro residues) spans 744-758; the sequence is RGPPPAPPPPPPPPR. A compositionally biased stretch (low complexity) spans 759 to 791; it reads ASAEPAASPDPPSALASPGSGLSSPGPKPGDSG. Pro residues predominate over residues 818 to 841; the sequence is PRAPPEPPDPGAPRPPPDPGPLPL. The segment covering 935-954 has biased composition (basic and acidic residues); that stretch reads DMKEKVAENGLESPEKEERA. Phosphoserine is present on residues Ser-947, Ser-962, and Ser-977. Positions 994-1004 are enriched in basic and acidic residues; it reads RNTERPPEIGP. Over residues 1084–1094 the composition is skewed to gly residues; sequence GSGGRALGGVG. Over residues 1095–1105 the composition is skewed to low complexity; that stretch reads TAPAGGPASAV. Residues 1167-1177 are compositionally biased toward basic and acidic residues; it reads DPLKPERKGPE. The segment covering 1200–1213 has biased composition (low complexity); sequence SRLSLALPPLTLTP. The segment covering 1231–1241 has biased composition (gly residues); that stretch reads AAGGEAGGAGA. The span at 1245–1261 shows a compositional bias: acidic residues; that stretch reads AEEDGEDEDEDEEDEEA. Residues 1262-1272 show a composition bias toward basic and acidic residues; the sequence is AGSRDPGRTRE. The segment covering 1329–1339 has biased composition (polar residues); that stretch reads ETPTNELSVQG. Over residues 1348-1360 the composition is skewed to pro residues; that stretch reads STPPAPPTPPHPT.

Belongs to the protein kinase superfamily. Tyr protein kinase family. In terms of assembly, interacts with ESR1. Interacts with AP-2 complex subunit alpha. Mg(2+) is required as a cofactor. In terms of processing, autophosphorylated. In terms of tissue distribution, expressed in brain. Predominantly expressed in cerebral cortex, thalamus, the cerebellum and hippocampal formation (at protein level).

Its subcellular location is the membrane. The protein localises to the cell projection. The protein resides in the axon. It is found in the dendrite. It localises to the golgi apparatus membrane. It carries out the reaction L-seryl-[protein] + ATP = O-phospho-L-seryl-[protein] + ADP + H(+). The enzyme catalyses L-threonyl-[protein] + ATP = O-phospho-L-threonyl-[protein] + ADP + H(+). Functionally, protein kinase which phosphorylates ESR1 (in vitro) and protects it against proteasomal degradation. May also regulate ESR1 levels indirectly via a PKC-AKT-FOXO3 pathway where it decreases the activity of PKC and the phosphorylation of AKT, thereby increasing binding of transcriptional activator FOXO3 to the ESR1 promoter and increasing ESR1 transcription. Involved in endocytic trafficking of N-methyl-D-aspartate receptors (NMDAR) in neurons. This is Serine/threonine-protein kinase LMTK3 (Lmtk3) from Mus musculus (Mouse).